A 598-amino-acid polypeptide reads, in one-letter code: Beta-myrcene/(E)-beta-ocimene synthase 2, chloroplastic (598 aa).

A chloroplast-targeting transit peptide spans 1–30 (MATLCIGSAPIYQNACIHNFRLQRPRRFIS). (2E)-geranyl diphosphate is bound by residues Arg307, Asp344, Asp348, Arg486, and Asn489. 2 residues coordinate Mg(2+): Asp344 and Asp348. A DDXXD motif motif is present at residues 344-348 (DDIYD). Asn489, Thr493, and Glu497 together coordinate Mg(2+).

This sequence belongs to the terpene synthase family. Tpsb subfamily. Mg(2+) is required as a cofactor. The cofactor is Mn(2+). As to expression, expressed exclusively in mature flowers, but not in inmmature buds.

The protein localises to the plastid. Its subcellular location is the chloroplast. The catalysed reaction is (2E)-geranyl diphosphate = beta-myrcene + diphosphate. The protein operates within secondary metabolite biosynthesis; terpenoid biosynthesis. In terms of biological role, involved in monoterpene (C10) biosynthesis. The major products are alpha- and beta-pinene, sabinene, beta-myrcene, (E)-beta-ocimene and limonene. This is Beta-myrcene/(E)-beta-ocimene synthase 2, chloroplastic (TPS24) from Arabidopsis thaliana (Mouse-ear cress).